The following is a 638-amino-acid chain: Phosphomethylpyrimidine synthase (638 aa).

Substrate contacts are provided by residues N243, M272, Y301, H337, 357-359 (SRG), 398-401 (DGLR), and E437. H441 serves as a coordination point for Zn(2+). Y464 contacts substrate. H505 serves as a coordination point for Zn(2+). C585, C588, and C593 together coordinate [4Fe-4S] cluster.

Belongs to the ThiC family. Homodimer. The cofactor is [4Fe-4S] cluster.

It carries out the reaction 5-amino-1-(5-phospho-beta-D-ribosyl)imidazole + S-adenosyl-L-methionine = 4-amino-2-methyl-5-(phosphooxymethyl)pyrimidine + CO + 5'-deoxyadenosine + formate + L-methionine + 3 H(+). It participates in cofactor biosynthesis; thiamine diphosphate biosynthesis. Functionally, catalyzes the synthesis of the hydroxymethylpyrimidine phosphate (HMP-P) moiety of thiamine from aminoimidazole ribotide (AIR) in a radical S-adenosyl-L-methionine (SAM)-dependent reaction. In Aromatoleum aromaticum (strain DSM 19018 / LMG 30748 / EbN1) (Azoarcus sp. (strain EbN1)), this protein is Phosphomethylpyrimidine synthase.